The sequence spans 211 residues: Thiamine-phosphate synthase (211 aa).

4-amino-2-methyl-5-(diphosphooxymethyl)pyrimidine contacts are provided by residues 37-41 and Asn-69; that span reads QLRIK. Residues Asp-70 and Asp-89 each coordinate Mg(2+). Residue Ser-108 participates in 4-amino-2-methyl-5-(diphosphooxymethyl)pyrimidine binding. 134 to 136 serves as a coordination point for 2-[(2R,5Z)-2-carboxy-4-methylthiazol-5(2H)-ylidene]ethyl phosphate; the sequence is TQT. Lys-137 provides a ligand contact to 4-amino-2-methyl-5-(diphosphooxymethyl)pyrimidine. 2-[(2R,5Z)-2-carboxy-4-methylthiazol-5(2H)-ylidene]ethyl phosphate contacts are provided by residues Gly-166 and 186 to 187; that span reads VS.

The protein belongs to the thiamine-phosphate synthase family. The cofactor is Mg(2+).

It catalyses the reaction 2-[(2R,5Z)-2-carboxy-4-methylthiazol-5(2H)-ylidene]ethyl phosphate + 4-amino-2-methyl-5-(diphosphooxymethyl)pyrimidine + 2 H(+) = thiamine phosphate + CO2 + diphosphate. The catalysed reaction is 2-(2-carboxy-4-methylthiazol-5-yl)ethyl phosphate + 4-amino-2-methyl-5-(diphosphooxymethyl)pyrimidine + 2 H(+) = thiamine phosphate + CO2 + diphosphate. The enzyme catalyses 4-methyl-5-(2-phosphooxyethyl)-thiazole + 4-amino-2-methyl-5-(diphosphooxymethyl)pyrimidine + H(+) = thiamine phosphate + diphosphate. It functions in the pathway cofactor biosynthesis; thiamine diphosphate biosynthesis; thiamine phosphate from 4-amino-2-methyl-5-diphosphomethylpyrimidine and 4-methyl-5-(2-phosphoethyl)-thiazole: step 1/1. Its function is as follows. Condenses 4-methyl-5-(beta-hydroxyethyl)thiazole monophosphate (THZ-P) and 2-methyl-4-amino-5-hydroxymethyl pyrimidine pyrophosphate (HMP-PP) to form thiamine monophosphate (TMP). This Salmonella dublin (strain CT_02021853) protein is Thiamine-phosphate synthase.